The primary structure comprises 1230 residues: Serine/threonine-protein kinase CST20 (1230 aa).

Residues 1 to 20 are compositionally biased toward polar residues; sequence MSILSENNPTPTSITDPNKS. Disordered stretches follow at residues 1 to 384 and 413 to 470; these read MSIL…TAHN and SSLE…HSQE. Low complexity-rich tracts occupy residues 57 to 70 and 96 to 125; these read NTTS…SLGS and SGSG…NPES. A compositionally biased stretch (basic and acidic residues) spans 150 to 161; that stretch reads HQGDDSDNEKQY. 3 stretches are compositionally biased toward polar residues: residues 175–197, 207–224, and 237–246; these read DSYS…NNVS, TSSL…NENA, and PTSKTSSFHD. Low complexity predominate over residues 248–257; sequence SSVISSSTSV. Polar residues-rich tracts occupy residues 262 to 277 and 311 to 330; these read SNPT…SYKS and DTLS…TLQG. Low complexity-rich tracts occupy residues 349–381 and 439–468; these read NTSA…STST and KVRG…NSHS. In terms of domain architecture, CRIB spans 475–488; that stretch reads ISTPFNAKHLAHVG. Disordered stretches follow at residues 545 to 831 and 867 to 919; these read FHFD…ALAD and LREK…KQAA. The segment covering 550–561 has biased composition (polar residues); it reads NKSSSSGWSNEN. Positions 570-581 are enriched in gly residues; that stretch reads SNSGSGSGGGGA. The segment covering 604–613 has biased composition (polar residues); it reads ITPSQSMPTK. Over residues 614-628 the composition is skewed to basic and acidic residues; that stretch reads TESKQSENQHPHEDN. The segment covering 629–642 has biased composition (polar residues); sequence ATQYTPRTPTSHVQ. Low complexity-rich tracts occupy residues 670–683, 696–710, and 736–749; these read PSSQ…SQSD, SPSK…SKSL, and SIPK…SLSS. The segment covering 750–761 has biased composition (polar residues); that stretch reads QLRPATNGSTTA. Residues 789-807 are compositionally biased toward pro residues; it reads APPPPPSAPPAPPVPPAPP. Residues 811-826 show a composition bias toward polar residues; the sequence is LSEQTSEIPQQRTAPS. The segment covering 867 to 876 has biased composition (basic and acidic residues); that stretch reads LREKNERQNR. The span at 877–892 shows a compositional bias: polar residues; the sequence is QQETGQNNADTASGGS. The Protein kinase domain occupies 953–1205; that stretch reads YVDLVKIGQG…ADELLHDNFI (253 aa). Residues 959-967 and Lys983 contribute to the ATP site; that span reads IGQGASGGV. Residue Asp1073 is the Proton acceptor of the active site.

It belongs to the protein kinase superfamily. STE Ser/Thr protein kinase family. STE20 subfamily.

Its subcellular location is the cytoplasm. The protein resides in the nucleus. It catalyses the reaction L-seryl-[protein] + ATP = O-phospho-L-seryl-[protein] + ADP + H(+). The catalysed reaction is L-threonyl-[protein] + ATP = O-phospho-L-threonyl-[protein] + ADP + H(+). In terms of biological role, MAP4K component of the MAPK pathway required for the mating pheromone response, and the regulation of cell polarity and cell cycle. Phosphorylates histone H2B to form H2BS10ph. Required for hyphal formation and virulence. The chain is Serine/threonine-protein kinase CST20 (CST20) from Candida albicans (Yeast).